The sequence spans 241 residues: Lipopolysaccharide export system ATP-binding protein LptB (241 aa).

The ABC transporter domain occupies 4–237; the sequence is LTAKNLAKAY…EHVKRVYLGE (234 aa). 36-43 contributes to the ATP binding site; that stretch reads GPNGAGKT.

It belongs to the ABC transporter superfamily. Outer membrane lipopolysaccharide export (TC 1.B.42) family. In terms of assembly, component of the lipopolysaccharide transport and assembly complex. The LptBFG transporter is composed of two ATP-binding proteins (LptB) and two transmembrane proteins (LptF and LptG).

It localises to the cytoplasm. It is found in the cell inner membrane. Functionally, part of the ABC transporter complex LptBFG involved in the translocation of lipopolysaccharide (LPS) from the inner membrane to the outer membrane. Probably responsible for energy coupling to the transport system. This Escherichia coli O157:H7 protein is Lipopolysaccharide export system ATP-binding protein LptB (lptB).